The following is a 327-amino-acid chain: GTPase Obg (327 aa).

In terms of domain architecture, Obg spans 1–159; it reads MQFIDQANII…WEVQLELKLL (159 aa). The OBG-type G domain occupies 160 to 327; that stretch reads AEVGIIGLPN…SLLSEVWKRI (168 aa). ATP-binding positions include 166-173, 191-195, 213-216, 280-283, and 309-311; these read GLPNAGKS, FTTLI, DIPG, NKME, and SSS. Mg(2+)-binding residues include serine 173 and threonine 193.

Belongs to the TRAFAC class OBG-HflX-like GTPase superfamily. OBG GTPase family. Monomer. Mg(2+) serves as cofactor.

The protein localises to the cytoplasm. In terms of biological role, an essential GTPase which binds GTP, GDP and possibly (p)ppGpp with moderate affinity, with high nucleotide exchange rates and a fairly low GTP hydrolysis rate. Plays a role in control of the cell cycle, stress response, ribosome biogenesis and in those bacteria that undergo differentiation, in morphogenesis control. In Prochlorococcus marinus (strain MIT 9215), this protein is GTPase Obg.